The sequence spans 219 residues: Bacterial microcompartment shell protein EutL (219 aa).

BMC circularly permuted domains are found at residues 1 to 113 and 114 to 215; these read MPAL…GAAF and QWAN…ARNP. Residues Asp45, Asp46, Glu83, and Phe113 each coordinate ethanolamine. The segment at 45–46 is part of the acidic patch lining the small pore; that stretch reads DD. Glu157 contacts Zn(2+). Residue 183 to 185 participates in ethanolamine binding; that stretch reads TNY.

This sequence belongs to the EutL/PduB family. Homotrimerizes to form a pseudohexamer. The trimers form a two-dimensional array about 37 Angstroms thick.

Its subcellular location is the bacterial microcompartment. It functions in the pathway amine and polyamine degradation; ethanolamine degradation. Functionally, a component of the bacterial microcompartment (BMC) shell dedicated to ethanolamine degradation. Two crystal forms have been seen; a form with a closed central pore that has 3 very small (1.1-2.2 Angstroms) channels per trimer lined by acidic and aromatic residues. A form with a large central pore (8-12 Angstroms) has also been seen; this is probably a functional pore which allows molecules to enter and exit the BMC in a selective, gated manner. Another group only sees the central pore in the presence of Zn(2+); soaking crystals in ZnCl(2) leads to dramatic conformational changes that open a central pore of about 12 Angstroms. Whether Zn(2+) binding is physiologically relevant is unclear, however it suggests a gating mechanism exists. Ethanolamine-binding by the small channels has been hypothesized to stabilize the EutL central pore in a closed (non-transporting) state. An open pore is thought to be large enough to transport ATP and/or cobalamin. This is Bacterial microcompartment shell protein EutL (eutL) from Escherichia coli (strain K12).